The following is a 99-amino-acid chain: CTP synthase (99 aa).

One can recognise a Glutamine amidotransferase type-1 domain in the interval Thr-1–Lys-99. Position 28 (Arg-28) interacts with L-glutamine. Residues His-73 and Glu-75 contribute to the active site.

It belongs to the CTP synthase family. Homotetramer.

It carries out the reaction UTP + L-glutamine + ATP + H2O = CTP + L-glutamate + ADP + phosphate + 2 H(+). It catalyses the reaction L-glutamine + H2O = L-glutamate + NH4(+). The enzyme catalyses UTP + NH4(+) + ATP = CTP + ADP + phosphate + 2 H(+). Its pathway is pyrimidine metabolism; CTP biosynthesis via de novo pathway; CTP from UDP: step 2/2. Its activity is regulated as follows. Allosterically activated by GTP, when glutamine is the substrate; GTP has no effect on the reaction when ammonia is the substrate. The allosteric effector GTP functions by stabilizing the protein conformation that binds the tetrahedral intermediate(s) formed during glutamine hydrolysis. Inhibited by the product CTP, via allosteric rather than competitive inhibition. In terms of biological role, catalyzes the ATP-dependent amination of UTP to CTP with either L-glutamine or ammonia as the source of nitrogen. Regulates intracellular CTP levels through interactions with the four ribonucleotide triphosphates. The polypeptide is CTP synthase (Mycoplasma capricolum subsp. capripneumoniae).